The following is a 274-amino-acid chain: MSLQETIIQELGVKPVIDAQEEIRRSIDFLKRYLKKHPFLKTFVLGISGGQDSTLAGRLAQLAMEELRAETGDDSYKFIAVRLPYGVQADEADAQKALAFIQPDVSLVVNIKESADAMTAAVEATGSPVSDFNKGNIKARCRMIAQYALAGFHSGAVIGTDHAAENITGFFTKFGDGGADILPLYRLNKRQGKQLLQKLGAEPALYEKIPTADLEEDKPGLADEVALGVTYAEIDDYLEGKTISPEAQATIENWWHKGQHKRHLPITVFDDFWE.

46–53 is an ATP binding site; that stretch reads GISGGQDS. Residue aspartate 52 participates in Mg(2+) binding. A deamido-NAD(+)-binding site is contributed by arginine 140. Threonine 160 lines the ATP pocket. Residue glutamate 165 participates in Mg(2+) binding. Residues lysine 173 and aspartate 180 each contribute to the deamido-NAD(+) site. ATP-binding residues include lysine 189 and threonine 211. 260 to 261 contributes to the deamido-NAD(+) binding site; that stretch reads HK.

This sequence belongs to the NAD synthetase family. Homodimer.

It carries out the reaction deamido-NAD(+) + NH4(+) + ATP = AMP + diphosphate + NAD(+) + H(+). It functions in the pathway cofactor biosynthesis; NAD(+) biosynthesis; NAD(+) from deamido-NAD(+) (ammonia route): step 1/1. Catalyzes the ATP-dependent amidation of deamido-NAD to form NAD. Uses ammonia as a nitrogen source. In Streptococcus pneumoniae serotype 19F (strain G54), this protein is NH(3)-dependent NAD(+) synthetase.